A 559-amino-acid chain; its full sequence is Innexin-10 (559 aa).

4 consecutive transmembrane segments (helical) span residues 28 to 48, 102 to 122, 182 to 202, and 283 to 303; these read YFTC…QFGG, QWVP…SLLW, FLWL…YLCT, and IFIL…GSFF. 2 disordered regions span residues 488–514 and 527–559; these read EEKQ…YQNQ and YRTP…STFK. Over residues 503-514 the composition is skewed to low complexity; it reads YTNQNPTPYQNQ. Residues 528-559 are compositionally biased toward polar residues; the sequence is RTPSLSRGTDSRPVSTATDTDQTKKQSMSTFK.

Belongs to the pannexin family.

The protein localises to the cell membrane. Its subcellular location is the cell junction. It is found in the gap junction. Structural component of the gap junctions. This chain is Innexin-10 (inx-10), found in Caenorhabditis elegans.